The primary structure comprises 513 residues: 2,3-bisphosphoglycerate-independent phosphoglycerate mutase (513 aa).

Aspartate 12 and serine 62 together coordinate Mn(2+). The active-site Phosphoserine intermediate is serine 62. Residues histidine 123, 153–154, arginine 185, arginine 191, 261–264, and lysine 335 contribute to the substrate site; these read RD and RSDR. Mn(2+)-binding residues include aspartate 402, histidine 406, aspartate 443, histidine 444, and histidine 462.

Belongs to the BPG-independent phosphoglycerate mutase family. As to quaternary structure, monomer. Requires Mn(2+) as cofactor.

The catalysed reaction is (2R)-2-phosphoglycerate = (2R)-3-phosphoglycerate. Its pathway is carbohydrate degradation; glycolysis; pyruvate from D-glyceraldehyde 3-phosphate: step 3/5. In terms of biological role, catalyzes the interconversion of 2-phosphoglycerate and 3-phosphoglycerate. The chain is 2,3-bisphosphoglycerate-independent phosphoglycerate mutase from Thiobacillus denitrificans (strain ATCC 25259 / T1).